A 431-amino-acid chain; its full sequence is Chorismate synthase 2, chloroplastic (431 aa).

A chloroplast-targeting transit peptide spans 1–48; sequence MASSMLTKQFLGAPFSSFGSGQQPSKLCSSNLRFPTHRSQPKRLEIQA. Positions 93–141 are disordered; the sequence is DRRRPGQSRITTPRKETDTCKISSGTADGLTTGSPIKVEVPNTDQRGND. The span at 112–126 shows a compositional bias: polar residues; that stretch reads CKISSGTADGLTTGS.

Belongs to the chorismate synthase family. As to quaternary structure, homotetramer. The cofactor is FMNH2. Predominantly expressed in flowers and roots and, to a lesser extent, in stems, leaves, and cotyledons.

It is found in the plastid. Its subcellular location is the chloroplast. The enzyme catalyses 5-O-(1-carboxyvinyl)-3-phosphoshikimate = chorismate + phosphate. The protein operates within metabolic intermediate biosynthesis; chorismate biosynthesis; chorismate from D-erythrose 4-phosphate and phosphoenolpyruvate: step 7/7. Catalyzes the last common step of the biosynthesis of aromatic amino acids, produced via the shikimic acid pathway. The polypeptide is Chorismate synthase 2, chloroplastic (CS2) (Solanum lycopersicum (Tomato)).